Reading from the N-terminus, the 142-residue chain is Transcription antitermination protein NusB (142 aa).

This sequence belongs to the NusB family.

Its function is as follows. Involved in transcription antitermination. Required for transcription of ribosomal RNA (rRNA) genes. Binds specifically to the boxA antiterminator sequence of the ribosomal RNA (rrn) operons. The chain is Transcription antitermination protein NusB from Roseiflexus sp. (strain RS-1).